A 224-amino-acid chain; its full sequence is CMRF35-like molecule 6 (224 aa).

Positions 1-20 (MTARAWASWRSSALLLLLVP) are cleaved as a signal peptide. The Extracellular segment spans residues 21–183 (GYFPLSHPMT…HPGSLFSNVR (163 aa)). Positions 22-130 (YFPLSHPMTV…HDPIVEVEVS (109 aa)) constitute an Ig-like V-type domain. 2 disulfide bridges follow: C43-C110 and C57-C65. N-linked (GlcNAc...) asparagine glycans are attached at residues N90 and N99. Over residues 136-151 (TTTASSPQSSMGTSGP) the composition is skewed to polar residues. The tract at residues 136–174 (TTTASSPQSSMGTSGPPTKLPVHTWPSVTRKDSPEPSPH) is disordered. Residues 184-204 (FLLLVLLELPLLLSMLGAVLW) traverse the membrane as a helical segment. Residues 205 to 224 (VNRPQRSSRSRQNWPKGENQ) are Cytoplasmic-facing.

This sequence belongs to the CD300 family. As to expression, present on the surface of monocytes, neutrophils, a proportion of peripheral blood T- and B-lymphocytes and lymphocytic cell lines.

It is found in the cell membrane. This is CMRF35-like molecule 6 (CD300C) from Homo sapiens (Human).